The following is a 257-amino-acid chain: 4-hydroxy-tetrahydrodipicolinate reductase (257 aa).

NAD(+) is bound by residues 7 to 12 (GAAGRM), aspartate 32, 91 to 93 (GTT), and 115 to 118 (SPNF). Histidine 147 acts as the Proton donor/acceptor in catalysis. Histidine 148 is a (S)-2,3,4,5-tetrahydrodipicolinate binding site. Catalysis depends on lysine 151, which acts as the Proton donor. 157–158 (GT) is a (S)-2,3,4,5-tetrahydrodipicolinate binding site.

This sequence belongs to the DapB family.

The protein localises to the cytoplasm. It carries out the reaction (S)-2,3,4,5-tetrahydrodipicolinate + NAD(+) + H2O = (2S,4S)-4-hydroxy-2,3,4,5-tetrahydrodipicolinate + NADH + H(+). The catalysed reaction is (S)-2,3,4,5-tetrahydrodipicolinate + NADP(+) + H2O = (2S,4S)-4-hydroxy-2,3,4,5-tetrahydrodipicolinate + NADPH + H(+). The protein operates within amino-acid biosynthesis; L-lysine biosynthesis via DAP pathway; (S)-tetrahydrodipicolinate from L-aspartate: step 4/4. Catalyzes the conversion of 4-hydroxy-tetrahydrodipicolinate (HTPA) to tetrahydrodipicolinate. This is 4-hydroxy-tetrahydrodipicolinate reductase from Archaeoglobus fulgidus (strain ATCC 49558 / DSM 4304 / JCM 9628 / NBRC 100126 / VC-16).